The chain runs to 963 residues: Tudor domain-containing protein 5 (963 aa).

HTH OST-type domains are found at residues 6–79 and 122–197; these read IMQR…SAVV and VSPV…LRKS. The tract at residues 232–306 is disordered; it reads NEPQRPEKKP…ENKTSPAVPS (75 aa). Polar residues predominate over residues 257–276; sequence KFSSQEPQSITSSRSFLHSS. Positions 375–449 constitute an HTH OST-type 3 domain; it reads VSDDLRSDIK…GKDWKLFGAK (75 aa). One can recognise a Tudor domain in the interval 586 to 645; sequence CISVGQIYALRVPGDVWWYRVIVHSIKNSELLDVFYPDFGNVATVKKSWLRFLKNCYMKV. 3 disordered regions span residues 739–763, 803–822, and 864–891; these read TPSQEKPQEESSKSSVPSESSQSEV, GAGGSNTTPTIPKVETQKQE, and ESTDIQQSSHTEEQHLAEKSHRCTAEQL. Over residues 751–763 the composition is skewed to low complexity; the sequence is KSSVPSESSQSEV. Basic and acidic residues predominate over residues 873–887; sequence HTEEQHLAEKSHRCT.

Belongs to the TDRD5 family.

The protein localises to the cytoplasm. In terms of biological role, required during spermiogenesis to participate in the repression transposable elements and prevent their mobilization, which is essential for the germline integrity. Probably acts via the piRNA metabolic process, which mediates the repression of transposable elements during meiosis by forming complexes composed of piRNAs and Piwi proteins and govern the methylation and subsequent repression of transposons. The sequence is that of Tudor domain-containing protein 5 (tdrd5) from Xenopus laevis (African clawed frog).